The primary structure comprises 125 residues: Small ribosomal subunit protein eS8 (125 aa).

This sequence belongs to the eukaryotic ribosomal protein eS8 family. Part of the 30S ribosomal subunit.

This is Small ribosomal subunit protein eS8 from Methanocorpusculum labreanum (strain ATCC 43576 / DSM 4855 / Z).